Reading from the N-terminus, the 352-residue chain is Protein-glutamate methylesterase/protein-glutamine glutaminase (352 aa).

Residues 4–121 (RVLIVDDSAT…YDGIDEIQKE (118 aa)) form the Response regulatory domain. 4-aspartylphosphate is present on Asp-55. The 193-residue stretch at 159-351 (AQTTNKLIAI…VKIASLLSER (193 aa)) folds into the CheB-type methylesterase domain. Catalysis depends on residues Ser-171, His-197, and Asp-293.

Belongs to the CheB family. Post-translationally, phosphorylated by CheA. Phosphorylation of the N-terminal regulatory domain activates the methylesterase activity.

It localises to the cytoplasm. It carries out the reaction [protein]-L-glutamate 5-O-methyl ester + H2O = L-glutamyl-[protein] + methanol + H(+). The enzyme catalyses L-glutaminyl-[protein] + H2O = L-glutamyl-[protein] + NH4(+). Involved in chemotaxis. Part of a chemotaxis signal transduction system that modulates chemotaxis in response to various stimuli. Catalyzes the demethylation of specific methylglutamate residues introduced into the chemoreceptors (methyl-accepting chemotaxis proteins or MCP) by CheR. Also mediates the irreversible deamidation of specific glutamine residues to glutamic acid. The protein is Protein-glutamate methylesterase/protein-glutamine glutaminase of Sulfurimonas denitrificans (strain ATCC 33889 / DSM 1251) (Thiomicrospira denitrificans (strain ATCC 33889 / DSM 1251)).